The chain runs to 103 residues: Cystatin-A1 (103 aa).

The Secondary area of contact signature appears at 51-55; that stretch reads QVVAG.

The protein belongs to the cystatin family.

The protein localises to the cytoplasm. Functionally, this is an intracellular thiol proteinase inhibitor. The chain is Cystatin-A1 from Sus scrofa (Pig).